Here is a 119-residue protein sequence, read N- to C-terminus: ATP-dependent Clp protease adapter protein ClpS (119 aa).

Positions 1-24 are disordered; sequence MGPESPDSIPPHGPGNGDGDQDLD.

It belongs to the ClpS family. As to quaternary structure, binds to the N-terminal domain of the chaperone ClpA.

In terms of biological role, involved in the modulation of the specificity of the ClpAP-mediated ATP-dependent protein degradation. The sequence is that of ATP-dependent Clp protease adapter protein ClpS from Gluconobacter oxydans (strain 621H) (Gluconobacter suboxydans).